A 483-amino-acid polypeptide reads, in one-letter code: Glutamyl-tRNA(Gln) amidotransferase subunit A (483 aa).

Residues lysine 76 and serine 151 each act as charge relay system in the active site. The active-site Acyl-ester intermediate is serine 175.

It belongs to the amidase family. GatA subfamily. Heterotrimer of A, B and C subunits.

The enzyme catalyses L-glutamyl-tRNA(Gln) + L-glutamine + ATP + H2O = L-glutaminyl-tRNA(Gln) + L-glutamate + ADP + phosphate + H(+). Functionally, allows the formation of correctly charged Gln-tRNA(Gln) through the transamidation of misacylated Glu-tRNA(Gln) in organisms which lack glutaminyl-tRNA synthetase. The reaction takes place in the presence of glutamine and ATP through an activated gamma-phospho-Glu-tRNA(Gln). The protein is Glutamyl-tRNA(Gln) amidotransferase subunit A of Ectopseudomonas mendocina (strain ymp) (Pseudomonas mendocina).